We begin with the raw amino-acid sequence, 215 residues long: RNA pyrophosphohydrolase (215 aa).

The region spanning 6–149 (GFRPNVGIIL…KRDVYQLALT (144 aa)) is the Nudix hydrolase domain. Positions 38–59 (GGIKYGETPMQAMYRELHEETG) match the Nudix box motif.

This sequence belongs to the Nudix hydrolase family. RppH subfamily. A divalent metal cation serves as cofactor.

In terms of biological role, accelerates the degradation of transcripts by removing pyrophosphate from the 5'-end of triphosphorylated RNA, leading to a more labile monophosphorylated state that can stimulate subsequent ribonuclease cleavage. This Burkholderia multivorans (strain ATCC 17616 / 249) protein is RNA pyrophosphohydrolase.